The following is a 152-amino-acid chain: Urease accessory protein UreE (152 aa).

The protein belongs to the UreE family.

Its subcellular location is the cytoplasm. Functionally, involved in urease metallocenter assembly. Binds nickel. Probably functions as a nickel donor during metallocenter assembly. The sequence is that of Urease accessory protein UreE from Psychromonas ingrahamii (strain DSM 17664 / CCUG 51855 / 37).